Reading from the N-terminus, the 359-residue chain is tRNA-specific 2-thiouridylase MnmA (359 aa).

ATP-binding positions include 6–13 and Leu32; that span reads AMSGGVDS. The active-site Nucleophile is the Cys97. A disulfide bridge connects residues Cys97 and Cys195. An ATP-binding site is contributed by Gly121. The interaction with tRNA stretch occupies residues 144-146; that stretch reads KDQ. Cys195 (cysteine persulfide intermediate) is an active-site residue.

It belongs to the MnmA/TRMU family.

The protein resides in the cytoplasm. It carries out the reaction S-sulfanyl-L-cysteinyl-[protein] + uridine(34) in tRNA + AH2 + ATP = 2-thiouridine(34) in tRNA + L-cysteinyl-[protein] + A + AMP + diphosphate + H(+). Catalyzes the 2-thiolation of uridine at the wobble position (U34) of tRNA, leading to the formation of s(2)U34. The chain is tRNA-specific 2-thiouridylase MnmA from Tropheryma whipplei (strain Twist) (Whipple's bacillus).